The sequence spans 426 residues: Oligouridylate-binding protein 1A (426 aa).

Residues 1–26 (MQNQRLIKQQQQQQQQQHQQAMIQQA) are disordered. Low complexity predominate over residues 9–26 (QQQQQQQQQHQQAMIQQA). 2 RRM domains span residues 63 to 137 (RSVY…WAYA) and 148 to 226 (FNIF…WATK). Residues 230-268 (FGEDKHSSDGKSVVELTNGSSEDGRELSNEDAPENNPQF) form a disordered region. Residue Ser-250 is modified to Phosphoserine. One can recognise an RRM 3 domain in the interval 269–344 (TTVYVGNLSP…RQIRCSWGNK (76 aa)).

In terms of assembly, interacts with UBA1A and UBA2A.

The protein resides in the nucleus. In terms of biological role, heterogeneous nuclear ribonucleoprotein (hnRNP)-like protein that acts as a component of the pre-mRNA processing machinery. Functions to facilitate the nuclear maturation of plant pre-mRNAs. The chain is Oligouridylate-binding protein 1A (UBP1A) from Arabidopsis thaliana (Mouse-ear cress).